Consider the following 753-residue polypeptide: 5-methyltetrahydropteroyltriglutamate--homocysteine methyltransferase (753 aa).

Residues Arg-17–Lys-20 and Lys-117 contribute to the 5-methyltetrahydropteroyltri-L-glutamate site. Residues Ile-431–Ser-433 and Glu-484 contribute to the L-homocysteine site. Residues Ile-431–Ser-433 and Glu-484 contribute to the L-methionine site. 5-methyltetrahydropteroyltri-L-glutamate contacts are provided by residues Arg-515 to Cys-516 and Trp-561. L-homocysteine is bound at residue Asp-599. Asp-599 contacts L-methionine. Glu-605 lines the 5-methyltetrahydropteroyltri-L-glutamate pocket. Residues His-641, Cys-643, and Glu-665 each coordinate Zn(2+). His-694 (proton donor) is an active-site residue. Cys-726 provides a ligand contact to Zn(2+).

The protein belongs to the vitamin-B12 independent methionine synthase family. It depends on Zn(2+) as a cofactor.

The catalysed reaction is 5-methyltetrahydropteroyltri-L-glutamate + L-homocysteine = tetrahydropteroyltri-L-glutamate + L-methionine. It participates in amino-acid biosynthesis; L-methionine biosynthesis via de novo pathway; L-methionine from L-homocysteine (MetE route): step 1/1. In terms of biological role, catalyzes the transfer of a methyl group from 5-methyltetrahydrofolate to homocysteine resulting in methionine formation. The protein is 5-methyltetrahydropteroyltriglutamate--homocysteine methyltransferase of Escherichia coli (strain SMS-3-5 / SECEC).